A 177-amino-acid polypeptide reads, in one-letter code: uncharacterized protein (177 aa).

This is an uncharacterized protein from Acanthamoeba polyphaga (Amoeba).